We begin with the raw amino-acid sequence, 92 residues long: UPF0223 protein EF_2462 (92 aa).

It belongs to the UPF0223 family.

The chain is UPF0223 protein EF_2462 from Enterococcus faecalis (strain ATCC 700802 / V583).